We begin with the raw amino-acid sequence, 103 residues long: Truncated secreted TNF-receptor-like protein A53R (103 aa).

Residues 36 to 73 (SCDKGEYLDKRHNQCCNRCPPGEFAKVRCNGNDNTKCE) form a TNFR-Cys 1 repeat. 3 cysteine pairs are disulfide-bonded: Cys37-Cys50, Cys51-Cys64, and Cys54-Cys72. The stretch at 74–103 (RCPPHTYTTIPIILMDVINVENAQPDHLIR) is one TNFR-Cys 2; truncated repeat.

The protein belongs to the poxviridae A53R protein family.

The sequence is that of Truncated secreted TNF-receptor-like protein A53R from Vaccinia virus (strain Western Reserve) (VACV).